Reading from the N-terminus, the 277-residue chain is Bis(5'-nucleosyl)-tetraphosphatase, symmetrical (277 aa).

Belongs to the Ap4A hydrolase family.

It carries out the reaction P(1),P(4)-bis(5'-adenosyl) tetraphosphate + H2O = 2 ADP + 2 H(+). Its function is as follows. Hydrolyzes diadenosine 5',5'''-P1,P4-tetraphosphate to yield ADP. The protein is Bis(5'-nucleosyl)-tetraphosphatase, symmetrical of Bordetella pertussis (strain Tohama I / ATCC BAA-589 / NCTC 13251).